Here is a 236-residue protein sequence, read N- to C-terminus: Pyridoxal 5'-phosphate synthase subunit PdxT (236 aa).

L-glutamine is bound at residue 61–63 (GES). Cys93 serves as the catalytic Nucleophile. L-glutamine-binding positions include Arg127 and 163–164 (IR). Active-site charge relay system residues include His215 and Glu217.

Belongs to the glutaminase PdxT/SNO family. As to quaternary structure, in the presence of PdxS, forms a dodecamer of heterodimers. Only shows activity in the heterodimer.

It catalyses the reaction aldehydo-D-ribose 5-phosphate + D-glyceraldehyde 3-phosphate + L-glutamine = pyridoxal 5'-phosphate + L-glutamate + phosphate + 3 H2O + H(+). The enzyme catalyses L-glutamine + H2O = L-glutamate + NH4(+). The protein operates within cofactor biosynthesis; pyridoxal 5'-phosphate biosynthesis. Catalyzes the hydrolysis of glutamine to glutamate and ammonia as part of the biosynthesis of pyridoxal 5'-phosphate. The resulting ammonia molecule is channeled to the active site of PdxS. In Pseudarthrobacter chlorophenolicus (strain ATCC 700700 / DSM 12829 / CIP 107037 / JCM 12360 / KCTC 9906 / NCIMB 13794 / A6) (Arthrobacter chlorophenolicus), this protein is Pyridoxal 5'-phosphate synthase subunit PdxT.